The following is a 70-amino-acid chain: uncharacterized protein (70 aa).

The chain crosses the membrane as a helical span at residues 12–32; the sequence is VLFMNFFSVFVCTIGTLFLVF.

It is found in the membrane. This is an uncharacterized protein from Saccharomyces cerevisiae (strain ATCC 204508 / S288c) (Baker's yeast).